Reading from the N-terminus, the 283-residue chain is NFU1 iron-sulfur cluster scaffold homolog, mitochondrial (283 aa).

Residues 1 to 30 (MSKFLSQAALNTLRNTRLGSRQLVRSFAGI) constitute a mitochondrion transit peptide. A nifU region spans residues 182–250 (IKELLDTRIR…IPEVESVEQV (69 aa)). Residues Cys219 and Cys222 each coordinate [4Fe-4S] cluster.

This sequence belongs to the NifU family.

Its subcellular location is the mitochondrion. Molecular scaffold for [Fe-S] cluster assembly of mitochondrial iron-sulfur proteins. In Drosophila erecta (Fruit fly), this protein is NFU1 iron-sulfur cluster scaffold homolog, mitochondrial.